The sequence spans 468 residues: Midnolin (468 aa).

In terms of domain architecture, Ubiquitin-like spans 31 to 105; that stretch reads MSLAIHSTTG…LTLVPTVEAG (75 aa). 2 disordered regions span residues 182–264 and 404–447; these read PSIA…RSRK and LRRK…LGLD. Positions 185–201 are enriched in low complexity; sequence ASPVSSPCRPVSSAARV. Residues 202–213 are compositionally biased toward pro residues; the sequence is PPVPTSPSPASP. Low complexity-rich tracts occupy residues 237-260 and 419-431; these read SPTA…SPAP and SPSR…DSSS.

As to quaternary structure, interacts with GCK; the interaction occurs preferentially at low glucose levels. Interacts with the proteasome.

The protein localises to the nucleus. It is found in the nucleolus. The protein resides in the cytoplasm. It localises to the cytosol. In terms of biological role, facilitates the ubiquitin-independent proteasomal degradation of stimulus-induced transcription factors such as FOSB, EGR1, NR4A1, and IRF4 to the proteasome for degradation. Promotes also the degradation of other substrates such as CBX4. Plays a role in inhibiting the activity of glucokinase GCK and both glucose-induced and basal insulin secretion. The chain is Midnolin (MIDN) from Homo sapiens (Human).